A 765-amino-acid polypeptide reads, in one-letter code: MTVSPTSAPTQAIDTVERAATTPDEPQPFGELGLKDDEYQRIREILGRRPTDTELAMYSVMWSEHCSYKSSKVHLRYFGETTTDEMRAGMLAGIGENAGVVDIGDGWAVTFKVESHNHPSYVEPYQGAATGVGGIVRDIMAMGARPVAVMDQLRFGAADAPDTRRVLDGVVRGIGGYGNSLGLPNIGGETVFDACYAGNPLVNAMCVGVLRQEDLHMAFASGTGNKIILFGARTGLDGIGGVSVLASDTFDAENSRKKLPSVQVGDPFMEKVLIECCLELYAGGLVVGIQDLGGAGLACATSELASAGDGGMEVRLEAVPLRTAGMTPAEVLCSESQERMCAVVTPENVDAFLAVCRKWDVLATVIGEVTDGDRLRITWHGQTVVDVPPRTVAHEGPVYQRPLARPDTQDALNADSSARLPRPATGAELRATLLALLGSPHLCSRAFITEQYDRYVRGNTVLAEHADGGVLRVDETTGRGIAVSTDASGRYTMLDPYAGAQLALAEAYRNVAVTGATPVAVTNCLNFGSPEDPAVMWQFAQAVRGLADGCVALGIPVTGGNVSFYNQTGSAAILPTPVVGVLGVLDDVSRRLPTALGAEPGETLMLLGETRDEFDGSVWAQVTADHLGGLPPKVDLAREKLLAEVLRAASRDGLVSAAHDLSEGGLAQAVVEAALAGETGCRIVLPEDADPFVTLFSESAGRVLVAVPRTEESRFRSMCEARGLPAVRIGVVDQASDEVEVQGLFTVPLAELRQTSESVLPRLFG.

Residues 1–13 (MTVSPTSAPTQAI) show a composition bias toward polar residues. The tract at residues 1 to 32 (MTVSPTSAPTQAIDTVERAATTPDEPQPFGEL) is disordered. The active site involves His-65. Residues Tyr-68 and Lys-112 each coordinate ATP. Glu-114 contacts Mg(2+). Substrate contacts are provided by residues 115 to 118 (SHNH) and Arg-137. His-116 acts as the Proton acceptor in catalysis. Asp-138 is a Mg(2+) binding site. Gln-263 contributes to the substrate binding site. Asp-291 is a binding site for Mg(2+). 335 to 337 (ESQ) contacts substrate. ATP-binding residues include Asn-523 and Gly-560. Asn-561 lines the Mg(2+) pocket. Ser-563 serves as a coordination point for substrate.

Belongs to the FGAMS family. Monomer. Part of the FGAM synthase complex composed of 1 PurL, 1 PurQ and 2 PurS subunits.

It is found in the cytoplasm. The catalysed reaction is N(2)-formyl-N(1)-(5-phospho-beta-D-ribosyl)glycinamide + L-glutamine + ATP + H2O = 2-formamido-N(1)-(5-O-phospho-beta-D-ribosyl)acetamidine + L-glutamate + ADP + phosphate + H(+). It participates in purine metabolism; IMP biosynthesis via de novo pathway; 5-amino-1-(5-phospho-D-ribosyl)imidazole from N(2)-formyl-N(1)-(5-phospho-D-ribosyl)glycinamide: step 1/2. Its function is as follows. Part of the phosphoribosylformylglycinamidine synthase complex involved in the purines biosynthetic pathway. Catalyzes the ATP-dependent conversion of formylglycinamide ribonucleotide (FGAR) and glutamine to yield formylglycinamidine ribonucleotide (FGAM) and glutamate. The FGAM synthase complex is composed of three subunits. PurQ produces an ammonia molecule by converting glutamine to glutamate. PurL transfers the ammonia molecule to FGAR to form FGAM in an ATP-dependent manner. PurS interacts with PurQ and PurL and is thought to assist in the transfer of the ammonia molecule from PurQ to PurL. This is Phosphoribosylformylglycinamidine synthase subunit PurL from Mycolicibacterium paratuberculosis (strain ATCC BAA-968 / K-10) (Mycobacterium paratuberculosis).